Here is a 199-residue protein sequence, read N- to C-terminus: Dephospho-CoA kinase (199 aa).

Residues 3 to 199 form the DPCK domain; sequence VLGLTGSIGM…AAAKMPRRRD (197 aa). 11–16 lines the ATP pocket; sequence GMGKST.

It belongs to the CoaE family.

Its subcellular location is the cytoplasm. It catalyses the reaction 3'-dephospho-CoA + ATP = ADP + CoA + H(+). The protein operates within cofactor biosynthesis; coenzyme A biosynthesis; CoA from (R)-pantothenate: step 5/5. Functionally, catalyzes the phosphorylation of the 3'-hydroxyl group of dephosphocoenzyme A to form coenzyme A. The protein is Dephospho-CoA kinase of Rhodopseudomonas palustris (strain ATCC BAA-98 / CGA009).